The chain runs to 375 residues: Porin Omp2b (375 aa).

The signal sequence occupies residues 1-22; the sequence is MNIKSLLLGSAAALVAASGAQA.

The protein belongs to the alphaproteobacteria porin family. In terms of assembly, homotrimer.

It is found in the cell outer membrane. In terms of biological role, forms passive diffusion pores that allow small molecular weight hydrophilic materials across the outer membrane. This chain is Porin Omp2b (omp2b), found in Brucella suis.